Here is a 534-residue protein sequence, read N- to C-terminus: MFSWVSKDARRKKEPELFQTVAEGLRQLYAQKLLPLEEHYRFHEFHSPALEDADFDNKPMVLLVGQYSTGKTTFIRHLIEQDFPGMRIGPEPTTDSFIAVMHGPTEGVVPGNALVVDPRRPFRKLNAFGNAFLNRFMCAQLPNPVLDSISIIDTPGILSGEKQRISRGYDFAAVLEWFAERVDRIILLFDAHKLDISDEFSEVIKALKNHEDKIRVVLNKADQIETQQLMRVYGALMWSLGKIINTPEVVRVYIGSFWSHPLLIPDNRKLFEAEEQDLFKDIQSLPRNAALRKLNDLIKRARLAKVHAYIISSLKKEMPNVFGKESKKKELVNNLGEIYQKIEREHQISSGDFPSLRKMQELLQTQDFSKFQALKPKLLDTVDDMLANDIARLMVMVRQEESLMPSQAVKGGAFDGTMNGPFGHGYGEGAGEGIDDVEWVVGKDKPTYDEIFYTLSPVNGKITGANAKKEMVKSKLPNTVLGKIWKLADVDKDGLLDDEEFALANHLIKVKLEGHELPADLPPHLIPPSKRRHE.

Position 1 is an N-acetylmethionine (Met-1). The 232-residue stretch at 55–286 (FDNKPMVLLV…DLFKDIQSLP (232 aa)) folds into the Dynamin-type G domain. The segment at 65–72 (GQYSTGKT) is G1 motif. 65 to 72 (GQYSTGKT) is an ATP binding site. The segment at 91 to 92 (EP) is G2 motif. Residues 153–156 (DTPG) are G3 motif. Positions 198–227 (DEFSEVIKALKNHEDKIRVVLNKADQIETQ) form a coiled coil. Residues 219–222 (NKAD) form a G4 motif region. Position 220 (Lys-220) interacts with ATP. Residue Ile-243 is a region of interest, G5 motif. Trp-258 is a binding site for ATP. Residues Ser-355 and Ser-456 each carry the phosphoserine modification. An EH domain is found at 444-532 (DKPTYDEIFY…PHLIPPSKRR (89 aa)). The 36-residue stretch at 476–511 (LPNTVLGKIWKLADVDKDGLLDDEEFALANHLIKVK) folds into the EF-hand domain. Residues Asp-489, Asp-491, Asp-493, and Glu-500 each contribute to the Ca(2+) site.

It belongs to the TRAFAC class dynamin-like GTPase superfamily. Dynamin/Fzo/YdjA family. EHD subfamily. Homooligomer, and heterooligomer with EHD2, EHD3 and EHD4, ATP-binding is required for heterooligomerization. Interacts (via EH domain) with MICALL1 (via NPF1 motif); the interaction is direct and recruits EHD1 to membranes. Interacts with RAB35; the interaction is indirect through MICALL1 and recruits EHD1 to membranes. Interacts (via EH domain) with PACSIN2 (via NPF motifs); regulates localization to tubular recycling endosome membranes. Interacts with PACSIN1. Interacts with RAB8A. Interacts with FER1L5 (via second C2 domain). Interacts with MYOF. Interacts with ZFYVE20. Interacts (via EH domain) with RAB11FIP2.

It localises to the recycling endosome membrane. It is found in the early endosome membrane. The protein localises to the cell membrane. Its subcellular location is the cell projection. The protein resides in the cilium membrane. In terms of biological role, ATP- and membrane-binding protein that controls membrane reorganization/tubulation upon ATP hydrolysis. In vitro causes vesiculation of endocytic membranes. Acts in early endocytic membrane fusion and membrane trafficking of recycling endosomes. Recruited to endosomal membranes upon nerve growth factor stimulation, indirectly regulates neurite outgrowth. Plays a role in myoblast fusion. Involved in the unidirectional retrograde dendritic transport of endocytosed BACE1 and in efficient sorting of BACE1 to axons implicating a function in neuronal APP processing. Plays a role in the formation of the ciliary vesicle (CV), an early step in cilium biogenesis. Proposed to be required for the fusion of distal appendage vesicles (DAVs) to form the CV by recruiting SNARE complex component SNAP29. Is required for recruitment of transition zone proteins CEP290, RPGRIP1L, TMEM67 and B9D2, and of IFT20 following DAV reorganization before Rab8-dependent ciliary membrane extension. Required for the loss of CCP110 form the mother centriole essential for the maturation of the basal body during ciliogenesis. The sequence is that of EH domain-containing protein 1 from Rattus norvegicus (Rat).